We begin with the raw amino-acid sequence, 188 residues long: MSEKLQVVTLLGSLRKGSFNGMVARTLPKIAPASMEVNALPSIADIPLYDADVQQEEGFPATVEALAEQIRQADGVVIVTPEYNYSVPGGLKNAIDWLSRLPDQPLAGKPVLIQTSSMGVIGGARCQYHLRQILVFLDAMVMNKPEFMGGVIQNKVDPQTGEVIDQGTLDHLTGQLTAFGEFIQRVKI.

FMN contacts are provided by residues 13-20, 82-85, and serine 117; these read SLRKGSFN and EYNY.

The protein belongs to the SsuE family. As to quaternary structure, homotetramer. Dimer of dimers. The tetrameric configuration has a central role in chromate reductase activity. The cofactor is FMN.

The enzyme catalyses a quinone + NADH + H(+) = a quinol + NAD(+). The catalysed reaction is a quinone + NADPH + H(+) = a quinol + NADP(+). It catalyses the reaction Cr(6+) + 2 NADH + O2 = Cr(3+) + superoxide + 2 NAD(+) + 2 H(+). It carries out the reaction Cr(6+) + 2 NADPH + O2 = Cr(3+) + superoxide + 2 NADP(+) + 2 H(+). Catalyzes the reduction of quinones. Acts by simultaneous two-electron transfer, avoiding formation of highly reactive semiquinone intermediates and producing quinols that promote tolerance of H(2)O(2). Quinone reduction is probably the primary biological role of ChrR. Can also reduce toxic chromate to insoluble and less toxic Cr(3+). Catalyzes the transfer of three electrons to Cr(6+) producing Cr(3+) and one electron to molecular oxygen without producing the toxic Cr(5+) species and only producing a minimal amount of reactive oxygen species (ROS). Chromate reduction protects the cell against chromate toxicity, but is likely a secondary activity. The protein is Quinone reductase (chrR) of Escherichia coli O157:H7.